We begin with the raw amino-acid sequence, 324 residues long: Lipoyl synthase (324 aa).

[4Fe-4S] cluster-binding residues include Cys-71, Cys-76, Cys-82, Cys-97, Cys-101, Cys-104, and Ser-311. One can recognise a Radical SAM core domain in the interval 83-300; the sequence is FGHGTATFLI…GDKAREMGFT (218 aa).

Belongs to the radical SAM superfamily. Lipoyl synthase family. [4Fe-4S] cluster is required as a cofactor.

It localises to the cytoplasm. The enzyme catalyses [[Fe-S] cluster scaffold protein carrying a second [4Fe-4S](2+) cluster] + N(6)-octanoyl-L-lysyl-[protein] + 2 oxidized [2Fe-2S]-[ferredoxin] + 2 S-adenosyl-L-methionine + 4 H(+) = [[Fe-S] cluster scaffold protein] + N(6)-[(R)-dihydrolipoyl]-L-lysyl-[protein] + 4 Fe(3+) + 2 hydrogen sulfide + 2 5'-deoxyadenosine + 2 L-methionine + 2 reduced [2Fe-2S]-[ferredoxin]. The protein operates within protein modification; protein lipoylation via endogenous pathway; protein N(6)-(lipoyl)lysine from octanoyl-[acyl-carrier-protein]: step 2/2. In terms of biological role, catalyzes the radical-mediated insertion of two sulfur atoms into the C-6 and C-8 positions of the octanoyl moiety bound to the lipoyl domains of lipoate-dependent enzymes, thereby converting the octanoylated domains into lipoylated derivatives. This Nitrosococcus oceani (strain ATCC 19707 / BCRC 17464 / JCM 30415 / NCIMB 11848 / C-107) protein is Lipoyl synthase.